The following is a 1678-amino-acid chain: Serine/threonine-protein kinase pakD (1678 aa).

Residues 1–15 (MSRLQPQQQQRGRSS) are compositionally biased toward low complexity. Disordered regions lie at residues 1–73 (MSRL…NNKF), 180–224 (NSNS…PNKN), 262–428 (QLSS…NNNN), and 442–489 (KRKS…SQSS). Polar residues predominate over residues 17-34 (FKDNFQIQKPLQSLTPSE). Composition is skewed to low complexity over residues 35-73 (QQQQ…NNKF) and 180-214 (NSNS…NNNN). One can recognise a Calponin-homology (CH) domain in the interval 82-189 (KNVENDIKKW…NSNSSKTTTN (108 aa)). Residues 215–224 (RAIITSPNKN) show a composition bias toward polar residues. 2 stretches are compositionally biased toward low complexity: residues 276–359 (NNNN…NINN) and 399–428 (NNNN…NNNN). The segment covering 460 to 472 (DSSDSSDSSDSDS) has biased composition (acidic residues). Coiled coils occupy residues 512–542 (KQDK…KKLL) and 570–628 (TRQI…YANT). Low complexity-rich tracts occupy residues 631–654 (SSNS…INGS), 662–671 (NSSTSKGTLS), and 695–713 (NSHQ…QTTS). Disordered regions lie at residues 631-672 (SSNS…TLSR) and 693-722 (PVNS…ASYN). The stretch at 752–862 (VSATLQQKQQ…QNQQINNLID (111 aa)) forms a coiled coil. The Phorbol-ester/DAG-type zinc finger occupies 1141–1197 (PHSFVLKSFRIISECNYCRQYIWGVRGIVAREAFECVGCKYKTHKKCLKEASEKTFC). The CRIB domain maps to 1202 to 1215 (VGAPFNVKHEMHVG). Disordered regions lie at residues 1267–1292 (LTNN…QQNQ) and 1323–1346 (NNTY…PNNN). Residues 1269–1309 (NNSNNNNNNNNSNNNLQQQQQQNQQLKQKLNITNNQQNNTI) adopt a coiled-coil conformation. Residues 1376–1647 (YKVREVVGGG…AHYLLRHPFL (272 aa)) enclose the Protein kinase domain. ATP is bound by residues 1382–1390 (VGGGSTGKV) and lysine 1405. The active-site Proton acceptor is the aspartate 1515.

The protein belongs to the protein kinase superfamily. STE Ser/Thr protein kinase family. STE20 subfamily. Mg(2+) serves as cofactor.

It carries out the reaction L-seryl-[protein] + ATP = O-phospho-L-seryl-[protein] + ADP + H(+). It catalyses the reaction L-threonyl-[protein] + ATP = O-phospho-L-threonyl-[protein] + ADP + H(+). The chain is Serine/threonine-protein kinase pakD from Dictyostelium discoideum (Social amoeba).